The following is a 371-amino-acid chain: Anhydro-N-acetylmuramic acid kinase (371 aa).

Residue 9–16 (GTSLDAVD) participates in ATP binding.

The protein belongs to the anhydro-N-acetylmuramic acid kinase family.

It catalyses the reaction 1,6-anhydro-N-acetyl-beta-muramate + ATP + H2O = N-acetyl-D-muramate 6-phosphate + ADP + H(+). It participates in amino-sugar metabolism; 1,6-anhydro-N-acetylmuramate degradation. Its pathway is cell wall biogenesis; peptidoglycan recycling. Its function is as follows. Catalyzes the specific phosphorylation of 1,6-anhydro-N-acetylmuramic acid (anhMurNAc) with the simultaneous cleavage of the 1,6-anhydro ring, generating MurNAc-6-P. Is required for the utilization of anhMurNAc either imported from the medium or derived from its own cell wall murein, and thus plays a role in cell wall recycling. The sequence is that of Anhydro-N-acetylmuramic acid kinase from Caulobacter vibrioides (strain ATCC 19089 / CIP 103742 / CB 15) (Caulobacter crescentus).